A 451-amino-acid chain; its full sequence is Exodeoxyribonuclease 7 large subunit (451 aa).

It belongs to the XseA family. As to quaternary structure, heterooligomer composed of large and small subunits.

The protein localises to the cytoplasm. It catalyses the reaction Exonucleolytic cleavage in either 5'- to 3'- or 3'- to 5'-direction to yield nucleoside 5'-phosphates.. Functionally, bidirectionally degrades single-stranded DNA into large acid-insoluble oligonucleotides, which are then degraded further into small acid-soluble oligonucleotides. This Neisseria meningitidis serogroup A / serotype 4A (strain DSM 15465 / Z2491) protein is Exodeoxyribonuclease 7 large subunit.